Consider the following 570-residue polypeptide: Pentatricopeptide repeat-containing protein At1g31430 (570 aa).

PPR repeat units lie at residues 10–44 (SLLMYNKMLKSLADGKSFTKVLALFGELRGQGLYP), 45–79 (DNFTLPVVLKSIGRLRKVIEGEKVHGYAVKAGLEF), 80–110 (DSYVSNSLMGMYASLGKIEITHKVFDEMPQR), 111–141 (DVVSWNGLISSYVGNGRFEDAIGVFKRMSQE), 147–177 (DEGTIVSTLSACSALKNLEIGERIYRFVVTE), 181–215 (SVRIGNALVDMFCKCGCLDKARAVFDSMRDKNVKC), 216–242 (WTSMVFGYVSTGRIDEARVLFERSPVK), 243–277 (DVVLWTAMMNGYVQFNRFDEALELFRCMQTAGIRP), 278–312 (DNFVLVSLLTGCAQTGALEQGKWIHGYINENRVTV), 313–343 (DKVVGTALVDMYAKCGCIETALEVFYEIKER), 344–378 (DTASWTSLIYGLAMNGMSGRALDLYYEMENVGVRL), 379–414 (DAITFVAVLTACNHGGFVAEGRKIFHSMTERHNVQP), and 415–449 (KSEHCSCLIDLLCRAGLLDEAEELIDKMRGESDET). The tract at residues 453-528 (VYCSLLSAAR…FPGCSSIEID (76 aa)) is type E motif. Positions 529–561 (GVGHEFIVGDDLLSHPKMDEINSMLHQTTNLML) are type E(+) motif.

This sequence belongs to the PPR family. PCMP-E subfamily.

The polypeptide is Pentatricopeptide repeat-containing protein At1g31430 (PCMP-E55) (Arabidopsis thaliana (Mouse-ear cress)).